Here is a 116-residue protein sequence, read N- to C-terminus: Large ribosomal subunit protein bL20 (116 aa).

This sequence belongs to the bacterial ribosomal protein bL20 family.

In terms of biological role, binds directly to 23S ribosomal RNA and is necessary for the in vitro assembly process of the 50S ribosomal subunit. It is not involved in the protein synthesizing functions of that subunit. The polypeptide is Large ribosomal subunit protein bL20 (Synechococcus elongatus (strain ATCC 33912 / PCC 7942 / FACHB-805) (Anacystis nidulans R2)).